The primary structure comprises 599 residues: Proline--tRNA ligase (599 aa).

The protein belongs to the class-II aminoacyl-tRNA synthetase family. ProS type 1 subfamily. In terms of assembly, homodimer.

It localises to the cytoplasm. The enzyme catalyses tRNA(Pro) + L-proline + ATP = L-prolyl-tRNA(Pro) + AMP + diphosphate. Its function is as follows. Catalyzes the attachment of proline to tRNA(Pro) in a two-step reaction: proline is first activated by ATP to form Pro-AMP and then transferred to the acceptor end of tRNA(Pro). As ProRS can inadvertently accommodate and process non-cognate amino acids such as alanine and cysteine, to avoid such errors it has two additional distinct editing activities against alanine. One activity is designated as 'pretransfer' editing and involves the tRNA(Pro)-independent hydrolysis of activated Ala-AMP. The other activity is designated 'posttransfer' editing and involves deacylation of mischarged Ala-tRNA(Pro). The misacylated Cys-tRNA(Pro) is not edited by ProRS. This chain is Proline--tRNA ligase, found in Prochlorococcus marinus (strain MIT 9303).